The chain runs to 273 residues: MLTKRIIPCLDVTLDRAGGCVVKGVEFVDLKEAGDPVELAKRYNEDGADELVFLDITASAHGRETMIDVIERTADEVFIPLTVGGGISSIEAIRQILRAGADKVSVNTSAVKNPEFIKESSDIFGAQCIVTAIDCKRNTNVKDNPDKTILELEDGTPAWYEVVIYGGRKNTGIDAVQWAKRAEELGSGEILLTSMDRDGTCAGYDIPITRKLSEELDIPIIASGGVGNPQHIYEGFSDGKADAALAASIFHFGEYSIQEVKEFLKERKIPVRL.

Residues D11 and D134 contribute to the active site.

Belongs to the HisA/HisF family. As to quaternary structure, heterodimer of HisH and HisF.

Its subcellular location is the cytoplasm. It carries out the reaction 5-[(5-phospho-1-deoxy-D-ribulos-1-ylimino)methylamino]-1-(5-phospho-beta-D-ribosyl)imidazole-4-carboxamide + L-glutamine = D-erythro-1-(imidazol-4-yl)glycerol 3-phosphate + 5-amino-1-(5-phospho-beta-D-ribosyl)imidazole-4-carboxamide + L-glutamate + H(+). The protein operates within amino-acid biosynthesis; L-histidine biosynthesis; L-histidine from 5-phospho-alpha-D-ribose 1-diphosphate: step 5/9. Its function is as follows. IGPS catalyzes the conversion of PRFAR and glutamine to IGP, AICAR and glutamate. The HisF subunit catalyzes the cyclization activity that produces IGP and AICAR from PRFAR using the ammonia provided by the HisH subunit. This Methanosarcina mazei (strain ATCC BAA-159 / DSM 3647 / Goe1 / Go1 / JCM 11833 / OCM 88) (Methanosarcina frisia) protein is Imidazole glycerol phosphate synthase subunit HisF.